A 280-amino-acid polypeptide reads, in one-letter code: Large ribosomal subunit protein uL2 (280 aa).

Residues 229-280 are disordered; sequence DHPHGGGEGKAPIGHPSPLTPWGKPTLGYKTRKKRKPSDRFIIQRANDKKEK.

Belongs to the universal ribosomal protein uL2 family. As to quaternary structure, part of the 50S ribosomal subunit. Forms a bridge to the 30S subunit in the 70S ribosome.

In terms of biological role, one of the primary rRNA binding proteins. Required for association of the 30S and 50S subunits to form the 70S ribosome, for tRNA binding and peptide bond formation. It has been suggested to have peptidyltransferase activity; this is somewhat controversial. Makes several contacts with the 16S rRNA in the 70S ribosome. The polypeptide is Large ribosomal subunit protein uL2 (Dictyoglomus turgidum (strain DSM 6724 / Z-1310)).